Here is a 150-residue protein sequence, read N- to C-terminus: Leukotriene C4 synthase (150 aa).

Topologically, residues 1–6 are cytoplasmic; it reads MKDEVA. The chain crosses the membrane as a helical span at residues 7–27; that stretch reads LLATVTLLGVLLQAYFSLQVI. Over 28 to 48 the chain is Lumenal; sequence RARRAHRVSPPLTTGPPEFER. Arginine 30 serves as a coordination point for glutathione. Arginine 31 acts as the Proton donor in catalysis. Residue serine 36 is modified to Phosphoserine. Residues 49-69 form a helical membrane-spanning segment; that stretch reads VYRAQVNCSEYFPLFLATLWV. Glutathione is bound by residues 51–55 and 58–59; these read RAQVN and EY. Residues 70–73 are Cytoplasmic-facing; sequence AGVY. The chain crosses the membrane as a helical span at residues 74-94; that stretch reads FHEGAAALCGLVYLFTRLRYF. 93–97 is a binding site for glutathione; the sequence is YFWGY. The Lumenal portion of the chain corresponds to 95–104; it reads WGYARSAQLR. Arginine 104 serves as the catalytic Proton acceptor. The chain crosses the membrane as a helical span at residues 105–124; the sequence is LAPLYASARALWLLLALATL. Over 125–150 the chain is Cytoplasmic; the sequence is GLLAHFLPAAARAALLRLLRALLRTA.

The protein belongs to the MAPEG family. As to quaternary structure, homotrimer. Interacts with ALOX5AP and ALOX5. In terms of processing, phosphorylation at Ser-36 by RPS6KB1 inhibits the leukotriene-C4 synthase activity.

It is found in the nucleus outer membrane. The protein localises to the endoplasmic reticulum membrane. The protein resides in the nucleus membrane. The enzyme catalyses leukotriene C4 = leukotriene A4 + glutathione. The catalysed reaction is (13S,14S)-epoxy-(4Z,7Z,9E,11E,16Z,19Z)-docosahexaenoate + glutathione = (13R)-S-glutathionyl-(14S)-hydroxy-(4Z,7Z,9E,11E,16Z,19Z)-docosahexaenoate. It functions in the pathway lipid metabolism; leukotriene C4 biosynthesis. Inhibited by MK886. Functionally, catalyzes the conjugation of leukotriene A4 with reduced glutathione (GSH) to form leukotriene C4 with high specificity. Can also catalyze the transfer of a glutathionyl group from glutathione (GSH) to 13(S),14(S)-epoxy-docosahexaenoic acid to form maresin conjugate in tissue regeneration 1 (MCTR1), a bioactive lipid mediator that possess potent anti-inflammatory and proresolving actions. The chain is Leukotriene C4 synthase (LTC4S) from Cavia porcellus (Guinea pig).